The chain runs to 339 residues: MPEHDVRLQQLTVWLDEQLNDLFRDNAWGEVPAGSLTAASSDASFRRYFRWQGAGHSFVIMDAPPPQENCRPFVAIDHLLASADVHVPLIHAQDLERGFLLLGDLGTQTYLDIINADNADGLFADAIDALLKFQRLPMDAPLPSYDDALLRREVELFPEWYVGRELGLTFTDAQKATWQRVSQLLIDSALAQPKVLVHRDYMPRNLMQSTPNPGVLDFQDAVYGPVTYDITCLFKDAFVSWPQARVEGWLGDYWQQAQAAGIPVHAEFEAFHRASDLMGVQRHLKVIGIFARICHRDGKPRYLGDVPRFFAYINEVIGRRPELAELGELIAELQAGARA.

Belongs to the kinase AmgK family.

It catalyses the reaction N-acetyl-D-muramate + ATP = N-acetyl-alpha-D-muramate 1-phosphate + ADP + H(+). It carries out the reaction N-acetyl-D-glucosamine + ATP = N-acetyl-alpha-D-glucosamine 1-phosphate + ADP + H(+). The protein operates within cell wall biogenesis; peptidoglycan recycling. Functionally, sugar kinase that catalyzes the ATP-dependent phosphorylation of N-acetylmuramate (MurNAc) and N-acetylglucosamine (GlcNAc) at its C1 hydroxyl group, leading to MurNAc alpha-1P and GlcNAc alpha-1P, respectively. Is involved in peptidoglycan recycling as part of a cell wall recycling pathway that bypasses de novo biosynthesis of the peptidoglycan precursor UDP-MurNAc. Plays a role in intrinsic resistance to fosfomycin, which targets the de novo synthesis of UDP-MurNAc. Is also able to use N-acetylgalactosamine (GalNAc) as a substrate, but not N-acetylmannosamine, N-deacetylated sugars or glucose. In Pseudomonas putida (strain ATCC 47054 / DSM 6125 / CFBP 8728 / NCIMB 11950 / KT2440), this protein is N-acetylmuramate/N-acetylglucosamine kinase.